The following is a 424-amino-acid chain: Kynureninase (424 aa).

Residues L106, T107, 134-137 (FPSD), D219, H222, and Y244 each bind pyridoxal 5'-phosphate. K245 carries the post-translational modification N6-(pyridoxal phosphate)lysine. The pyridoxal 5'-phosphate site is built by W274 and N302.

It belongs to the kynureninase family. In terms of assembly, homodimer. Pyridoxal 5'-phosphate serves as cofactor.

It carries out the reaction L-kynurenine + H2O = anthranilate + L-alanine + H(+). It catalyses the reaction 3-hydroxy-L-kynurenine + H2O = 3-hydroxyanthranilate + L-alanine + H(+). Its pathway is amino-acid degradation; L-kynurenine degradation; L-alanine and anthranilate from L-kynurenine: step 1/1. It functions in the pathway cofactor biosynthesis; NAD(+) biosynthesis; quinolinate from L-kynurenine: step 2/3. Functionally, catalyzes the cleavage of L-kynurenine (L-Kyn) and L-3-hydroxykynurenine (L-3OHKyn) into anthranilic acid (AA) and 3-hydroxyanthranilic acid (3-OHAA), respectively. The chain is Kynureninase from Xanthomonas campestris pv. campestris (strain B100).